The chain runs to 276 residues: HUWE1-associated protein modifying stress responses 2 (276 aa).

Disordered regions lie at residues 146–182 (GKVPPTPQPPRTPRMSPRPPAAASTQAAATESGTPVG), 204–238 (ISMRSGPPGSSSQDGGIASSGRWKSSFLENDPNSL), and 252–276 (VRKRTSAQFGDGSADSPLHKRNRMV). Residues 149-165 (PPTPQPPRTPRMSPRPP) are compositionally biased toward pro residues. 2 stretches are compositionally biased toward low complexity: residues 166-179 (AAASTQAAATESGT) and 208-219 (SGPPGSSSQDGG). The tract at residues 252–276 (VRKRTSAQFGDGSADSPLHKRNRMV) is nuclear localization signal.

Belongs to the HAPSTR1 family. In terms of assembly, homooligomer. Heterooligomer with HAPSTR1; the interaction is direct and stabilizes HAPSTR1 independently of HUWE1. Interacts with HUWE1.

The protein resides in the nucleus. Its function is as follows. Together with HAPSTR1 plays a central regulatory role in the cellular response to molecular stressors, such as DNA damage, nutrient scarcity, and protein misfolding. Regulates these multiple stress response signaling pathways by stabilizing HAPSTR1, but also independently of HAPSTR1. The chain is HUWE1-associated protein modifying stress responses 2 from Mus musculus (Mouse).